A 354-amino-acid polypeptide reads, in one-letter code: Protein-arginine kinase (354 aa).

The Phosphagen kinase C-terminal domain maps to 24–254; it reads IVLSSRIRLA…QQIIQQEKMA (231 aa). Residues 27 to 31, His-92, Arg-125, 176 to 180, and 207 to 212 contribute to the ATP site; these read SSRIR, RASVM, and RGIYGE. An RDXXRA motif of the pArg binding pocket involved in allosteric regulation motif is present at residues 337–342; the sequence is RDYRRA.

Belongs to the ATP:guanido phosphotransferase family.

It carries out the reaction L-arginyl-[protein] + ATP = N(omega)-phospho-L-arginyl-[protein] + ADP + H(+). With respect to regulation, appears to be allosterically activated by the binding of pArg-containing polypeptides to the pArg-binding pocket localized in the C-terminal domain of McsB. Catalyzes the specific phosphorylation of arginine residues in a large number of proteins. Is part of the bacterial stress response system. Protein arginine phosphorylation has a physiologically important role and is involved in the regulation of many critical cellular processes, such as protein homeostasis, motility, competence, and stringent and stress responses, by regulating gene expression and protein activity. This is Protein-arginine kinase from Bacillus cereus (strain G9842).